Reading from the N-terminus, the 539-residue chain is Heparanase-like protein 2 (539 aa).

The N-terminal stretch at 1–21 (MGFNVVVFLSCLLLLPPVTFG) is a signal peptide. 3 N-linked (GlcNAc...) asparagine glycosylation sites follow: asparagine 143, asparagine 163, and asparagine 181. Glutamate 198 functions as the Proton donor in the catalytic mechanism. Asparagine 300 carries an N-linked (GlcNAc...) asparagine glycan. Residue glutamate 316 is the Nucleophile of the active site. The N-linked (GlcNAc...) asparagine glycan is linked to asparagine 421.

It belongs to the glycosyl hydrolase 79 family.

It is found in the lysosome membrane. It localises to the secreted. Functionally, endoglycosidase which is a cell surface and extracellular matrix-degrading enzyme. Cleaves heparan sulfate proteoglycans (HSPGs) into heparan sulfate side chains and core proteoglycans. This is Heparanase-like protein 2 from Arabidopsis thaliana (Mouse-ear cress).